The chain runs to 360 residues: SVP1-like protein 2 (360 aa).

WD repeat units lie at residues 12 to 50, 191 to 231, and 236 to 275; these read AHEP…LRMK, AHKS…LRFE, and LDRA…PQPE.

Belongs to the WD repeat PROPPIN family.

The protein resides in the vacuole membrane. The protein localises to the cytoplasmic vesicle membrane. In terms of biological role, involved in mitochondrial or peroxisomal functions and amino acid signaling pathways. The polypeptide is SVP1-like protein 2 (HSV2) (Pichia angusta (Yeast)).